We begin with the raw amino-acid sequence, 473 residues long: Allene oxide synthase CYP74A2 (473 aa).

The heme b site is built by Lys88, His119, and Lys123. 2 residues coordinate (13S)-hydroperoxy-(9Z,11E)-octadecadienoate: Ser199 and Lys282. The heme b site is built by Lys424 and Cys426.

It belongs to the cytochrome P450 family. The cofactor is heme b.

It catalyses the reaction (13S)-hydroperoxy-(9Z,11E,15Z)-octadecatrienoate = (9Z,13S,15Z)-12,13-epoxyoctadeca-9,11,15-trienoate + H2O. The enzyme catalyses (13S)-hydroperoxy-(9Z,11E)-octadecadienoate = (9Z,13S)-12,13-epoxyoctadeca-9,11-dienoate + H2O. It functions in the pathway lipid metabolism; oxylipin biosynthesis. Its function is as follows. Cytochrome P450 enzyme involved in the biosynthesis of oxylipin jasmonates, important phytohormones acting as growth regulators and signaling molecules for plant defense. Functions as an allene oxide synthase that converts hydroperoxy fatty acids to unstable allene epoxides. Catalyzes the dehydration of 13-HPOTE ((13S)-hydroperoxy-(9Z,11E,15Z)-octadecatrienoate). Also catalyzes the dehydration of 13-HPODE ((13S)-hydroperoxy-(9Z,11E)-octadecadienoate). The protein is Allene oxide synthase CYP74A2 of Parthenium argentatum (Guayule rubber plant).